We begin with the raw amino-acid sequence, 306 residues long: Protein YIPF1 (306 aa).

Over 1–119 (MAAVDDLQFE…VRLYIRSNPD (119 aa)) the chain is Cytoplasmic. Residues 14 to 62 (NAATSLTANPDATTVNIEDPGETPKHQSGSPRGSGREEDDELLGNDDSD) form a disordered region. Polar residues predominate over residues 15-29 (AATSLTANPDATTVN). Over residues 50-59 (EEDDELLGND) the composition is skewed to acidic residues. Residues 120-140 (LYGPFWICATLVFAIAISGNL) form a helical membrane-spanning segment. Over 141–162 (SNFLIHLGEKTYRYVPEFRKVS) the chain is Lumenal. A helical membrane pass occupies residues 163 to 183 (IAATTIYAYAWLVPLALWGFL). The Cytoplasmic portion of the chain corresponds to 184–200 (MWRNSKVMNIVSYSFLE). The chain crosses the membrane as a helical span at residues 201–221 (IVCVYGYSLFIYIPTAILWII). Residues 222–227 (PQKAVR) are Lumenal-facing. A helical membrane pass occupies residues 228–248 (WILVMIALGISGSVLAMTFWP). Residues 249–256 (AVREDNRR) are Cytoplasmic-facing. Residues 257-277 (VALATIVTIVLLHMLLSVGCL) form a helical membrane-spanning segment. The Lumenal portion of the chain corresponds to 278–306 (AYFFDAPEMDHLPTTTATPNQTVAAAKSS). A glycan (N-linked (GlcNAc...) asparagine) is linked at Asn-297.

This sequence belongs to the YIP1 family. In terms of assembly, interacts with YIPF6; this interaction may stabilize YIPF1. May also form a ternary complex with YIPF2 and YIPF6.

The protein resides in the golgi apparatus. The protein localises to the cis-Golgi network membrane. Its subcellular location is the trans-Golgi network membrane. It localises to the late endosome membrane. In Pongo abelii (Sumatran orangutan), this protein is Protein YIPF1 (YIPF1).